The following is a 202-amino-acid chain: Holliday junction branch migration complex subunit RuvA (202 aa).

A domain I region spans residues 1-64 (MIDFLKGRLV…ETALEMFGFS (64 aa)). The tract at residues 65–143 (SELDRTAFLL…KQQVAVSAEL (79 aa)) is domain II. The segment at 144-152 (PASDGVPVL) is flexible linker. Residues 152–202 (LAGRAENEALAALISLGYTPREAREALNRLPDRKLDAAGLVHAALRIMGSQ) form a domain III region.

This sequence belongs to the RuvA family. As to quaternary structure, homotetramer. Forms an RuvA(8)-RuvB(12)-Holliday junction (HJ) complex. HJ DNA is sandwiched between 2 RuvA tetramers; dsDNA enters through RuvA and exits via RuvB. An RuvB hexamer assembles on each DNA strand where it exits the tetramer. Each RuvB hexamer is contacted by two RuvA subunits (via domain III) on 2 adjacent RuvB subunits; this complex drives branch migration. In the full resolvosome a probable DNA-RuvA(4)-RuvB(12)-RuvC(2) complex forms which resolves the HJ.

It localises to the cytoplasm. In terms of biological role, the RuvA-RuvB-RuvC complex processes Holliday junction (HJ) DNA during genetic recombination and DNA repair, while the RuvA-RuvB complex plays an important role in the rescue of blocked DNA replication forks via replication fork reversal (RFR). RuvA specifically binds to HJ cruciform DNA, conferring on it an open structure. The RuvB hexamer acts as an ATP-dependent pump, pulling dsDNA into and through the RuvAB complex. HJ branch migration allows RuvC to scan DNA until it finds its consensus sequence, where it cleaves and resolves the cruciform DNA. This Desulforudis audaxviator (strain MP104C) protein is Holliday junction branch migration complex subunit RuvA.